A 471-amino-acid polypeptide reads, in one-letter code: Citrate synthase, mitochondrial (471 aa).

A mitochondrion-targeting transit peptide spans 1-18; the sequence is MASLRSATALSRLRSRAG. Active-site residues include H307, H353, and D408.

It belongs to the citrate synthase family. In terms of assembly, homodimer.

It is found in the mitochondrion matrix. The catalysed reaction is oxaloacetate + acetyl-CoA + H2O = citrate + CoA + H(+). It participates in carbohydrate metabolism; tricarboxylic acid cycle; isocitrate from oxaloacetate: step 1/2. The chain is Citrate synthase, mitochondrial (CIT) from Citrus maxima (Pomelo).